Here is a 357-residue protein sequence, read N- to C-terminus: U3 small nucleolar ribonucleoprotein protein LCP5 (357 aa).

Ser2 bears the N-acetylserine mark. Disordered regions lie at residues Ser146–Pro211 and Asn301–Leu357. Positions Asp155–Glu166 are enriched in acidic residues. Polar residues predominate over residues Pro171–Ser183. 2 stretches are compositionally biased toward basic and acidic residues: residues Arg187–Asn196 and Ser348–Leu357.

It localises to the nucleus. It is found in the nucleolus. Functionally, component of the U3 small nucleolar ribonucleoprotein. Required for the early cleavages at sites A0, A1 and A2 of the pre-ribosomal RNA. Participates in ribosome biogenesis. In Saccharomyces cerevisiae (strain ATCC 204508 / S288c) (Baker's yeast), this protein is U3 small nucleolar ribonucleoprotein protein LCP5 (LCP5).